A 208-amino-acid polypeptide reads, in one-letter code: Uracil phosphoribosyltransferase (208 aa).

5-phospho-alpha-D-ribose 1-diphosphate-binding positions include Arg78, Arg103, and 130 to 138 (DPMLATGGS). Uracil is bound by residues Ile193 and 198–200 (GDA). Position 199 (Asp199) interacts with 5-phospho-alpha-D-ribose 1-diphosphate.

This sequence belongs to the UPRTase family. It depends on Mg(2+) as a cofactor.

It catalyses the reaction UMP + diphosphate = 5-phospho-alpha-D-ribose 1-diphosphate + uracil. It participates in pyrimidine metabolism; UMP biosynthesis via salvage pathway; UMP from uracil: step 1/1. Its activity is regulated as follows. Allosterically activated by GTP. Its function is as follows. Catalyzes the conversion of uracil and 5-phospho-alpha-D-ribose 1-diphosphate (PRPP) to UMP and diphosphate. This Citrobacter koseri (strain ATCC BAA-895 / CDC 4225-83 / SGSC4696) protein is Uracil phosphoribosyltransferase.